The primary structure comprises 449 residues: Glucose-6-phosphate isomerase (449 aa).

E291 serves as the catalytic Proton donor. Residues H312 and K426 contribute to the active site.

Belongs to the GPI family.

It is found in the cytoplasm. It catalyses the reaction alpha-D-glucose 6-phosphate = beta-D-fructose 6-phosphate. It functions in the pathway carbohydrate biosynthesis; gluconeogenesis. Its pathway is carbohydrate degradation; glycolysis; D-glyceraldehyde 3-phosphate and glycerone phosphate from D-glucose: step 2/4. Functionally, catalyzes the reversible isomerization of glucose-6-phosphate to fructose-6-phosphate. In Streptococcus agalactiae serotype Ia (strain ATCC 27591 / A909 / CDC SS700), this protein is Glucose-6-phosphate isomerase.